The primary structure comprises 1028 residues: Exportin-T (1028 aa).

This sequence belongs to the exportin family.

Its subcellular location is the nucleus. The protein resides in the cytoplasm. Its function is as follows. tRNA nucleus export receptor which facilitates tRNA translocation across the nuclear pore complex. Involved in pre-tRNA splicing, probably by affecting the interaction of pre-tRNA with splicing endonuclease. In Aspergillus terreus (strain NIH 2624 / FGSC A1156), this protein is Exportin-T (los1).